The sequence spans 1310 residues: Adhesion G protein-coupled receptor A3 (1310 aa).

The first 27 residues, 1–27 (MEPPPPLLLLPLALLALLWGGERGAAA), serve as a signal peptide directing secretion. The LRRNT domain occupies 28–70 (LPAGCKHDGRARGTGRAAAAAEGKVVCSSLELAQVLPPDTLPN). Residues 28–747 (LPAGCKHDGR…TELYTPAASL (720 aa)) lie on the Extracellular side of the membrane. N70 and N87 each carry an N-linked (GlcNAc...) asparagine glycan. LRR repeat units follow at residues 71-92 (RTVTLILSNNKISELKNGSFSG), 95-116 (LLERLDLRNNLISRIAPGAFWG), 119-140 (SLKRLDLTNNRIGCLNADVFRG), and 143-164 (NLVRLNLSGNLFTSLSQGTFDY). N-linked (GlcNAc...) asparagine glycans are attached at residues N148, N195, N290, N321, N422, N442, N581, N641, N676, and N717. Residues 176-226 (EYLLCDCNILWMHRWVKERNITVRDTRCVYPKSLQAQPVTGVKQELLTCDP) enclose the LRRCT domain. In terms of domain architecture, Ig-like spans 231 to 329 (PSFYMTPSHR…GNNTRTVDIV (99 aa)). Residues C253 and C313 are joined by a disulfide bond. The region spanning 572 to 739 (LDKQLSFKCN…AVLMDLTGTE (168 aa)) is the GAIN-B domain. The GPS stretch occupies residues 690-739 (AAQWDFDLLNGQGGWKSDGCCILYSDENITTIQCGSLGNYAVLMDLTGTE). C709 and C723 are disulfide-bonded. Residues 748–768 (LHPVVYTTAITLLLCLLAVII) traverse the membrane as a helical segment. Topologically, residues 769–785 (SYMYHHSLIRISLKSWH) are cytoplasmic. Residues 786–806 (MLVNLCFHILLTCVVFVGGIT) form a helical membrane-spanning segment. Residues 807–815 (QTRNASVCQ) lie on the Extracellular side of the membrane. Residue N810 is glycosylated (N-linked (GlcNAc...) asparagine). A helical membrane pass occupies residues 816 to 836 (AVGIILHYSTLATVLWVGVTA). At 837–865 (RNIYKQVTKKAKRCQDPDEPPAPPRPMLR) the chain is on the cytoplasmic side. A helical transmembrane segment spans residues 866–886 (FYLIGGGIPIIVCGITAAANI). Residues 887-908 (KNYGSRPSAPYCWMAWEPSLGA) lie on the Extracellular side of the membrane. A helical transmembrane segment spans residues 909 to 929 (FYGPASFITFVNCMYFLSIFI). Residues 930 to 985 (QLKRHPERKYELKEPTEEQQRLAANENGEINHQDSMSLSLISTSTLENEHSFQSQL) lie on the Cytoplasmic side of the membrane. A helical membrane pass occupies residues 986–1006 (LGASLTLLLYVILWMFGAMAV). At 1007–1013 (SLYYPLD) the chain is on the extracellular side. Residues 1014 to 1034 (LVFSFFFGATCLSFSAFMMVH) form a helical membrane-spanning segment. Topologically, residues 1035 to 1310 (HCINREDVRL…TGLWKHETTV (276 aa)) are cytoplasmic. 3 disordered regions span residues 1065 to 1084 (PPNSSATNGEAPKCTNSSAE), 1187 to 1208 (VEGSVQNGLPKSRPGSNEGHSR), and 1221 to 1264 (YNPP…ADLE). Positions 1222–1239 (NPPQQDSSDACSTLPKSS) are enriched in polar residues. Residues 1308–1310 (TTV) carry the PDZ-binding motif.

Belongs to the G-protein coupled receptor 2 family. Adhesion G-protein coupled receptor (ADGR) subfamily. In terms of assembly, interacts (via PDZ-binding motif) with DLG1. Expressed by spermatogonial progenitor cells located within the outer cell layer of the seminiferous tubule and by multipotent adult spermatogonial-derived stem cells.

The protein localises to the membrane. Functionally, orphan receptor that may have a role in planar cell polarity pathway. The protein is Adhesion G protein-coupled receptor A3 (Adgra3) of Mus musculus (Mouse).